A 138-amino-acid polypeptide reads, in one-letter code: Putative pre-16S rRNA nuclease (138 aa).

Belongs to the YqgF nuclease family.

Its subcellular location is the cytoplasm. In terms of biological role, could be a nuclease involved in processing of the 5'-end of pre-16S rRNA. This Polaromonas sp. (strain JS666 / ATCC BAA-500) protein is Putative pre-16S rRNA nuclease.